A 287-amino-acid polypeptide reads, in one-letter code: Probable ketose 3-epimerase (287 aa).

Residue glutamate 152 is the Proton donor/acceptor of the active site. 2 residues coordinate Mn(2+): glutamate 152 and aspartate 185. Histidine 188 is a substrate binding site. Histidine 211 contributes to the Mn(2+) binding site. Arginine 217 serves as a coordination point for substrate. Glutamate 246 serves as the catalytic Proton donor/acceptor. Glutamate 246 is a Mn(2+) binding site.

It belongs to the hyi family. Mn(2+) serves as cofactor.

Functionally, probably catalyzes the epimerization of ketopentoses and/or ketohexoses at the C3 position. The sequence is that of Probable ketose 3-epimerase from Synechocystis sp. (strain ATCC 27184 / PCC 6803 / Kazusa).